The primary structure comprises 343 residues: Sodium/bile acid cotransporter 7-B (343 aa).

The Cytoplasmic portion of the chain corresponds to 1 to 9; it reads MGLLERLRK. The helical transmembrane segment at 10-30 threads the bilayer; it reads EWFIIGIILVIVAAKLEPTIG. Residues 31–37 are Extracellular-facing; it reads EKGGPLK. A helical transmembrane segment spans residues 38–58; that stretch reads PEITITYIAVSAIFFNSGLSL. Topologically, residues 59 to 71 are cytoplasmic; sequence KTEELTNALMHVK. The chain crosses the membrane as a helical span at residues 72–92; it reads LHLFVQLFTLVFFPTAIWIFL. Residues 93 to 116 are Extracellular-facing; sequence QVLSLTPINEWLLKGLQTVSCMPP. A helical transmembrane segment spans residues 117–137; the sequence is PVSSAVILTKAVGGNEAAAIF. Asn-138 is a topological domain (cytoplasmic). The helical transmembrane segment at 139–159 threads the bilayer; that stretch reads SAFGSFLGIVVTPLLLLLFLG. The Extracellular segment spans residues 160 to 163; that stretch reads SSSS. The chain crosses the membrane as a helical span at residues 164-184; that stretch reads VPFTSIFSQLFMTVVVPLIIG. At 185–201 the chain is on the cytoplasmic side; sequence QIVRRYIKDWLERKKPP. A helical membrane pass occupies residues 202 to 222; the sequence is FGAISSCVLLMIIYTTFCDTF. The Extracellular segment spans residues 223-234; that stretch reads SNPNIDLDTFSL. The chain crosses the membrane as a helical span at residues 235 to 255; that stretch reads VVIVFIIFFIQLAFMLLTFLF. Topologically, residues 256–270 are cytoplasmic; the sequence is STSKNSGFTPADTVA. A helical transmembrane segment spans residues 271-291; that stretch reads IVFCSTHKSLTLGIPMLKIVF. At 292 to 298 the chain is on the extracellular side; that stretch reads AGYEHLS. A helical membrane pass occupies residues 299–319; the sequence is LISVPLLIYHPAQILLGSVLV. Residues 320 to 343 are Cytoplasmic-facing; the sequence is PTIKSWMLSRRKALKLTRQPKIPL.

This sequence belongs to the bile acid:sodium symporter (BASS) (TC 2.A.28) family.

Its subcellular location is the cell membrane. The protein localises to the endoplasmic reticulum membrane. It localises to the golgi apparatus membrane. Involved in teeth and skeletal development. Has an essential role in the biosynthesis and trafficking of glycosaminoglycans and glycoproteins to produce a proper functioning extracellular matrix. Required for extracellular matrix mineralization. Also involved in the regulation of cellular calcium homeostasis. Does not show transport activity towards bile acids or steroid sulfates. This Xenopus laevis (African clawed frog) protein is Sodium/bile acid cotransporter 7-B (slc10a7-b).